The sequence spans 547 residues: Putative cysteine ligase BshC (547 aa).

The stretch at 462–484 (NLAEENLDRVIAQARFLRQKVEH) forms a coiled coil.

Belongs to the BshC family.

Involved in bacillithiol (BSH) biosynthesis. May catalyze the last step of the pathway, the addition of cysteine to glucosamine malate (GlcN-Mal) to generate BSH. The protein is Putative cysteine ligase BshC of Heliobacterium modesticaldum (strain ATCC 51547 / Ice1).